A 474-amino-acid chain; its full sequence is Trigger factor (474 aa).

The 88-residue stretch at 174–261 folds into the PPIase FKBP-type domain; sequence GDIAVVSFKG…LKDLKEKELP (88 aa). The tract at residues 435–474 is disordered; it reads VKEKTTKTSKATKTSKTTKATKTASKTTKTTKTQNKKEKK. The segment covering 442-467 has biased composition (low complexity); the sequence is TSKATKTSKTTKATKTASKTTKTTKT.

Belongs to the FKBP-type PPIase family. Tig subfamily.

The protein resides in the cytoplasm. It carries out the reaction [protein]-peptidylproline (omega=180) = [protein]-peptidylproline (omega=0). In terms of biological role, involved in protein export. Acts as a chaperone by maintaining the newly synthesized protein in an open conformation. Functions as a peptidyl-prolyl cis-trans isomerase. The polypeptide is Trigger factor (Prochlorococcus marinus (strain AS9601)).